Here is a 125-residue protein sequence, read N- to C-terminus: L-fucose mutarotase (125 aa).

H13 acts as the Proton donor in catalysis.

The protein belongs to the RbsD / FucU family. FucU mutarotase subfamily.

The enzyme catalyses alpha-L-fucose = beta-L-fucose. Its activity is regulated as follows. Active toward L-galactopyranoside and D-arabinopyranoside but no D-fucopyranoside activity detected. Plays a role in the catabolism of L-fucose. Involved in the anomeric conversion of L-fucose. The sequence is that of L-fucose mutarotase from Xanthomonas campestris pv. campestris (strain ATCC 33913 / DSM 3586 / NCPPB 528 / LMG 568 / P 25).